The sequence spans 262 residues: Cytochrome c oxidase subunit 3 (262 aa).

7 helical membrane passes run Pro-16–Phe-36, Ser-39–Trp-59, Gly-83–Phe-103, Phe-128–Ala-148, Ala-160–Met-180, Phe-198–Val-218, and Trp-241–Gly-261.

The protein belongs to the cytochrome c oxidase subunit 3 family. As to quaternary structure, component of the cytochrome c oxidase (complex IV, CIV), a multisubunit enzyme composed of a catalytic core of 3 subunits and several supernumerary subunits. The complex exists as a monomer or a dimer and forms supercomplexes (SCs) in the inner mitochondrial membrane with ubiquinol-cytochrome c oxidoreductase (cytochrome b-c1 complex, complex III, CIII).

Its subcellular location is the mitochondrion inner membrane. It catalyses the reaction 4 Fe(II)-[cytochrome c] + O2 + 8 H(+)(in) = 4 Fe(III)-[cytochrome c] + 2 H2O + 4 H(+)(out). Functionally, component of the cytochrome c oxidase, the last enzyme in the mitochondrial electron transport chain which drives oxidative phosphorylation. The respiratory chain contains 3 multisubunit complexes succinate dehydrogenase (complex II, CII), ubiquinol-cytochrome c oxidoreductase (cytochrome b-c1 complex, complex III, CIII) and cytochrome c oxidase (complex IV, CIV), that cooperate to transfer electrons derived from NADH and succinate to molecular oxygen, creating an electrochemical gradient over the inner membrane that drives transmembrane transport and the ATP synthase. Cytochrome c oxidase is the component of the respiratory chain that catalyzes the reduction of oxygen to water. Electrons originating from reduced cytochrome c in the intermembrane space (IMS) are transferred via the dinuclear copper A center (CU(A)) of subunit 2 and heme A of subunit 1 to the active site in subunit 1, a binuclear center (BNC) formed by heme A3 and copper B (CU(B)). The BNC reduces molecular oxygen to 2 water molecules using 4 electrons from cytochrome c in the IMS and 4 protons from the mitochondrial matrix. This is Cytochrome c oxidase subunit 3 (COIII) from Metridium senile (Brown sea anemone).